Here is a 665-residue protein sequence, read N- to C-terminus: MLSLLLPLISLLFQIQCFTVKSQPVPLNQICSNVTGNFTVNTPYAVNLDRLISSLSSLRRNVNGFYNISVGDSDEKVNSISQCRGDVKLEVCINCIAMAGKRLVTLCPVQKEAIIWYDKCTFRYSNRTIFNRLEISPHTSITGTRNFTGDRDSWEKSLRGLLEGLKNRASVIGRSKKNFVVGETSGPSFQTLFGLVQCTPDISEEDCSYCLSQGIAKIPSCCDMKMGSYVMSPSCMLAYAPWRFYDPVDTDDPSSVPATPSRPPKNETRSVTQGDKNRGVPKALIFASASVAIVVLFIVLLVVFLKLRRKENIRNSENKHENENISTDSMKFDFSVLQDATSHFSLENKLGEGGFGAVYKGVLSDGQKIAVKRLSKNAQQGETEFKNEFLLVAKLQHRNLVKLLGYSIEGTERLLVYEFLPHTSLDKFIFDPIQGNELEWEIRYKIIGGVARGLLYLHQDSRLRIIHRDLKASNILLDEEMTPKIADFGMARLFDIDHTTQRYTNRIVGTFGYMAPEYVMHGQFSFKTDVYSFGVLVLEIISGKKNSGFSSEDSMGDLISFAWRNWKEGVALNLVDKILMTMSSYSSNMIMRCINIGLLCVQEKVAERPSMASVVLMLDGHTIALSEPSKPAFFSHSNAVSDSSSSLGHNAKTSNYNSNTELYPR.

A signal peptide spans 1–22 (MLSLLLPLISLLFQIQCFTVKS). Over 23–283 (QPVPLNQICS…GDKNRGVPKA (261 aa)) the chain is Extracellular. 2 consecutive Gnk2-homologous domains span residues 26-129 (PLNQ…NRTI) and 135-244 (ISPH…PWRF). N-linked (GlcNAc...) asparagine glycosylation is found at Asn33, Asn37, Asn67, Asn126, Asn146, and Asn266. The segment at 251–275 (DDPSSVPATPSRPPKNETRSVTQGD) is disordered. The chain crosses the membrane as a helical span at residues 284–304 (LIFASASVAIVVLFIVLLVVF). The Cytoplasmic portion of the chain corresponds to 305–665 (LKLRRKENIR…YNSNTELYPR (361 aa)). The region spanning 344-624 (FSLENKLGEG…VLMLDGHTIA (281 aa)) is the Protein kinase domain. ATP-binding positions include 350–358 (LGEGGFGAV) and Lys372. Position 417 is a phosphotyrosine (Tyr417). Asp469 (proton acceptor) is an active-site residue. The residue at position 473 (Ser473) is a Phosphoserine. Residue Thr510 is modified to Phosphothreonine. Residue Tyr518 is modified to Phosphotyrosine. The tract at residues 641 to 665 (SDSSSSLGHNAKTSNYNSNTELYPR) is disordered. Residues 647-665 (LGHNAKTSNYNSNTELYPR) are compositionally biased toward polar residues.

It belongs to the protein kinase superfamily. Ser/Thr protein kinase family. CRK subfamily.

The protein resides in the membrane. The enzyme catalyses L-seryl-[protein] + ATP = O-phospho-L-seryl-[protein] + ADP + H(+). It catalyses the reaction L-threonyl-[protein] + ATP = O-phospho-L-threonyl-[protein] + ADP + H(+). In Arabidopsis thaliana (Mouse-ear cress), this protein is Cysteine-rich receptor-like protein kinase 26 (CRK26).